The chain runs to 152 residues: Superoxide dismutase [Cu-Zn] (152 aa).

The Cu cation site is built by His-45, His-47, and His-62. Cys-56 and Cys-145 form a disulfide bridge. His-62, His-70, His-79, and Asp-82 together coordinate Zn(2+). His-119 serves as a coordination point for Cu cation.

It belongs to the Cu-Zn superoxide dismutase family. As to quaternary structure, homodimer. The cofactor is Cu cation. Zn(2+) is required as a cofactor.

It localises to the cytoplasm. It catalyses the reaction 2 superoxide + 2 H(+) = H2O2 + O2. Its function is as follows. Destroys radicals which are normally produced within the cells and which are toxic to biological systems. The chain is Superoxide dismutase [Cu-Zn] (SODCC) from Nicotiana plumbaginifolia (Leadwort-leaved tobacco).